The primary structure comprises 171 residues: NADP-reducing hydrogenase subunit HndA (171 aa).

The [2Fe-2S] cluster site is built by Cys-98, Cys-103, Cys-139, and Cys-143.

Belongs to the complex I 24 kDa subunit family. Heterotetramer composed of HndA, HndB, HndC and HndD subunits. HndA and HndB could form a heterodimeric intermediate in the electron transfer between the active site of hydrogenase subunit HndD and the NADP reduction site of the reducing subunit HndC. [2Fe-2S] cluster is required as a cofactor.

The enzyme catalyses H2 + NADP(+) = NADPH + H(+). Its activity is regulated as follows. Inhibited by oxygen. Its function is as follows. Catalyzes the reduction of NADP in the presence of molecular H(2) to yield NADPH. The chain is NADP-reducing hydrogenase subunit HndA (hndA) from Solidesulfovibrio fructosivorans (Desulfovibrio fructosivorans).